A 494-amino-acid polypeptide reads, in one-letter code: Putative bifunctional dihydrofolate reductase-thymidylate synthase (494 aa).

Residues 1–167 (MGIGKDGTLP…IKHSFISFVR (167 aa)) enclose the DHFR domain. Residue 2–8 (GIGKDGT) participates in NADP(+) binding. Residue Asp-16 participates in substrate binding. Residues 40-42 (RKT) and 61-64 (LTRS) each bind NADP(+). A substrate-binding site is contributed by Ile-103. 104-111 (GGGEILRQ) lines the NADP(+) pocket. Thr-124 lines the substrate pocket. The tract at residues 170-494 (KSIAEANDSS…HHKIEMKMAV (325 aa)) is thymidylate synthase. Residue Arg-231 coordinates dUMP. Cys-376 is a catalytic residue. DUMP contacts are provided by residues His-377, 395–399 (QRSAD), Asn-407, and 437–439 (HVY).

In the N-terminal section; belongs to the dihydrofolate reductase family. It in the C-terminal section; belongs to the thymidylate synthase family.

The enzyme catalyses (6S)-5,6,7,8-tetrahydrofolate + NADP(+) = 7,8-dihydrofolate + NADPH + H(+). The catalysed reaction is dUMP + (6R)-5,10-methylene-5,6,7,8-tetrahydrofolate = 7,8-dihydrofolate + dTMP. Its pathway is cofactor biosynthesis; tetrahydrofolate biosynthesis; 5,6,7,8-tetrahydrofolate from 7,8-dihydrofolate: step 1/1. In terms of biological role, bifunctional enzyme. Involved in de novo dTMP biosynthesis. Key enzyme in folate metabolism. Can play two different roles depending on the source of dihydrofolate: de novo synthesis of tetrahydrofolate or recycling of the dihydrofolate released as one of the end products of the TS catalyzed reaction. Catalyzes an essential reaction for de novo glycine and purine synthesis, DNA precursor synthesis, and for the conversion of dUMP to dTMP. This chain is Putative bifunctional dihydrofolate reductase-thymidylate synthase, found in Oryza sativa subsp. japonica (Rice).